The following is a 162-amino-acid chain: Glycine cleavage system H protein, mitochondrial (162 aa).

The N-terminal 31 residues, 1-31 (MALRMWASSTANALRLSSATRPHFSPLSRCF), are a transit peptide targeting the mitochondrion. Residues 53–135 (VATIGITDHA…YEDGWMIKVK (83 aa)) form the Lipoyl-binding domain. Lys94 bears the N6-lipoyllysine mark.

Belongs to the GcvH family. In terms of assembly, the glycine cleavage system is composed of four proteins: P, T, L and H. Requires (R)-lipoate as cofactor.

It is found in the mitochondrion. In terms of biological role, the glycine cleavage system catalyzes the degradation of glycine. The H protein shuttles the methylamine group of glycine from the P protein to the T protein. This chain is Glycine cleavage system H protein, mitochondrial (GDCSH), found in Flaveria anomala (Yellowtops).